Reading from the N-terminus, the 356-residue chain is Heparan sulfate 2-O-sulfotransferase 1 (356 aa).

At 1–11 (MGLLRIMLPPK) the chain is on the cytoplasmic side. A helical; Signal-anchor for type II membrane protein transmembrane segment spans residues 12–28 (LQLLAVLVFGVAVLFLE). The stretch at 24-51 (VLFLENQIQKLEESRGKLERAIARHEVR) forms a coiled coil. Residues 29-356 (NQIQKLEESR…FYEKIYPKSN (328 aa)) are Lumenal-facing. Adenosine 3',5'-bisphosphate-binding residues include lysine 83, threonine 84, alanine 85, serine 86, threonine 87, and serine 88. Asparagine 108 and asparagine 127 each carry an N-linked (GlcNAc...) asparagine glycan. Catalysis depends on residues histidine 140 and histidine 142. Adenosine 3',5'-bisphosphate is bound by residues arginine 164 and serine 172. 2 disulfides stabilise this stretch: cysteine 201–cysteine 209 and cysteine 222–cysteine 228. Adenosine 3',5'-bisphosphate-binding residues include tyrosine 279, serine 285, threonine 290, and lysine 293.

Belongs to the sulfotransferase 3 family. In terms of assembly, homotrimer. Expressed in heart, limb, head and trunk. At stages 20 and 24, it is expressed in the most regions of the first and second pharyngeal arche. In both wing and leg buds, it is detected at the overlying ectoderm and mesenchyme throughout stages 21, 23 and 24.

It localises to the golgi apparatus membrane. In terms of biological role, catalyzes the transfer of a sulfo group from 3'-phospho-5'-adenylyl sulfate (PAPS) to the 2-OH position of iduronic acid (IdoA) or glucuronic acid (GlcA) within the heparan sulfate (HS) chain and participates in HS biosynthesis. The polypeptide is Heparan sulfate 2-O-sulfotransferase 1 (Gallus gallus (Chicken)).